We begin with the raw amino-acid sequence, 72 residues long: Translation initiation factor IF-1 (72 aa).

The S1-like domain maps to 1 to 72 (MSKDDVIEVE…TRGRIIYRHK (72 aa)).

It belongs to the IF-1 family. As to quaternary structure, component of the 30S ribosomal translation pre-initiation complex which assembles on the 30S ribosome in the order IF-2 and IF-3, IF-1 and N-formylmethionyl-tRNA(fMet); mRNA recruitment can occur at any time during PIC assembly.

The protein localises to the cytoplasm. In terms of biological role, one of the essential components for the initiation of protein synthesis. Stabilizes the binding of IF-2 and IF-3 on the 30S subunit to which N-formylmethionyl-tRNA(fMet) subsequently binds. Helps modulate mRNA selection, yielding the 30S pre-initiation complex (PIC). Upon addition of the 50S ribosomal subunit IF-1, IF-2 and IF-3 are released leaving the mature 70S translation initiation complex. In Carboxydothermus hydrogenoformans (strain ATCC BAA-161 / DSM 6008 / Z-2901), this protein is Translation initiation factor IF-1.